The following is a 447-amino-acid chain: Na(+)-translocating NADH-quinone reductase subunit A (447 aa).

The protein belongs to the NqrA family. Composed of six subunits; NqrA, NqrB, NqrC, NqrD, NqrE and NqrF.

It carries out the reaction a ubiquinone + n Na(+)(in) + NADH + H(+) = a ubiquinol + n Na(+)(out) + NAD(+). Its function is as follows. NQR complex catalyzes the reduction of ubiquinone-1 to ubiquinol by two successive reactions, coupled with the transport of Na(+) ions from the cytoplasm to the periplasm. NqrA to NqrE are probably involved in the second step, the conversion of ubisemiquinone to ubiquinol. This chain is Na(+)-translocating NADH-quinone reductase subunit A, found in Haemophilus influenzae (strain ATCC 51907 / DSM 11121 / KW20 / Rd).